We begin with the raw amino-acid sequence, 258 residues long: Acyl-[acyl-carrier-protein]--UDP-N-acetylglucosamine O-acyltransferase (258 aa).

The protein belongs to the transferase hexapeptide repeat family. LpxA subfamily. In terms of assembly, homotrimer.

It is found in the cytoplasm. The enzyme catalyses a (3R)-hydroxyacyl-[ACP] + UDP-N-acetyl-alpha-D-glucosamine = a UDP-3-O-[(3R)-3-hydroxyacyl]-N-acetyl-alpha-D-glucosamine + holo-[ACP]. Its pathway is glycolipid biosynthesis; lipid IV(A) biosynthesis; lipid IV(A) from (3R)-3-hydroxytetradecanoyl-[acyl-carrier-protein] and UDP-N-acetyl-alpha-D-glucosamine: step 1/6. Involved in the biosynthesis of lipid A, a phosphorylated glycolipid that anchors the lipopolysaccharide to the outer membrane of the cell. The protein is Acyl-[acyl-carrier-protein]--UDP-N-acetylglucosamine O-acyltransferase of Ectopseudomonas mendocina (strain ymp) (Pseudomonas mendocina).